The chain runs to 99 residues: Putative gene 45 protein (99 aa).

The polypeptide is Putative gene 45 protein (45) (Bacillus phage SP01 (Bacteriophage SP01)).